The chain runs to 179 residues: Large ribosomal subunit protein uL6 (179 aa).

This sequence belongs to the universal ribosomal protein uL6 family. As to quaternary structure, part of the 50S ribosomal subunit.

In terms of biological role, this protein binds to the 23S rRNA, and is important in its secondary structure. It is located near the subunit interface in the base of the L7/L12 stalk, and near the tRNA binding site of the peptidyltransferase center. The sequence is that of Large ribosomal subunit protein uL6 from Trichlorobacter lovleyi (strain ATCC BAA-1151 / DSM 17278 / SZ) (Geobacter lovleyi).